The sequence spans 219 residues: Envelope protein UL45 homolog (219 aa).

The Intravirion segment spans residues 1-57; that stretch reads MEDYKLLQLETATVDAQAPPLPTKTVPVFAPPLSTPPQPNELVYTKRRRTKRKAKCR. A helical; Signal-anchor for type II membrane protein transmembrane segment spans residues 58 to 78; it reads CLFFTMGMFALGVLMTTAILV. At 79 to 219 the chain is on the virion surface side; the sequence is STFILTVPIG…RLDHIIPFPR (141 aa). N-linked (GlcNAc...) asparagine; by host glycosylation is found at asparagine 113, asparagine 120, and asparagine 138.

This sequence belongs to the herpesviridae HHV-1 UL45 family. N-glycosylated.

Its subcellular location is the virion membrane. In Equine herpesvirus 1 (strain Ab4p) (EHV-1), this protein is Envelope protein UL45 homolog.